Here is a 207-residue protein sequence, read N- to C-terminus: Outer-membrane lipoprotein LolB (207 aa).

The first 21 residues, 1 to 21, serve as a signal peptide directing secretion; that stretch reads MPTKTVRCLRLLPLASLLLAA. Cys22 carries the N-palmitoyl cysteine lipid modification. Cys22 is lipidated: S-diacylglycerol cysteine.

Belongs to the LolB family. Monomer.

The protein resides in the cell outer membrane. Its function is as follows. Plays a critical role in the incorporation of lipoproteins in the outer membrane after they are released by the LolA protein. The sequence is that of Outer-membrane lipoprotein LolB from Pectobacterium atrosepticum (strain SCRI 1043 / ATCC BAA-672) (Erwinia carotovora subsp. atroseptica).